The following is a 370-amino-acid chain: Protein-tyrosine sulfotransferase 1 (370 aa).

At 1-8 (MVGKLKQN) the chain is on the cytoplasmic side. The helical; Signal-anchor for type II membrane protein transmembrane segment at 9–25 (LLLACLVISSVTVFYLG) threads the bilayer. Residues 26-370 (QHAMECHHRI…KEKPQTEQVE (345 aa)) are Lumenal-facing. Residue Asn60 is glycosylated (N-linked (GlcNAc...) asparagine). A 3'-phosphoadenylyl sulfate-binding site is contributed by 79-83 (RSGTT). Cys97 and Cys157 are oxidised to a cystine. Residue Glu100 is the Proton donor/acceptor of the active site. An interaction with peptide substrate region spans residues 102-106 (RVIPR). Positions 184, 192, and 196 each coordinate 3'-phosphoadenylyl sulfate. Cys226 and Cys234 are joined by a disulfide. Tyr239 serves as a coordination point for 3'-phosphoadenylyl sulfate. Asn262 carries N-linked (GlcNAc...) asparagine glycosylation. 3'-phosphoadenylyl sulfate-binding positions include 286–295 (STDQVIKPVN) and Lys301.

Belongs to the protein sulfotransferase family. As to quaternary structure, homodimer. Can also form heterodimers with TPST2. N-glycosylated.

The protein localises to the golgi apparatus membrane. It catalyses the reaction L-tyrosyl-[protein] + 3'-phosphoadenylyl sulfate = O-sulfo-L-tyrosine-[protein] + adenosine 3',5'-bisphosphate + H(+). Its function is as follows. Catalyzes the O-sulfation of tyrosine residues within acidic motifs of polypeptides, using 3'-phosphoadenylyl sulfate (PAPS) as cosubstrate. This Rattus norvegicus (Rat) protein is Protein-tyrosine sulfotransferase 1 (Tpst1).